A 325-amino-acid polypeptide reads, in one-letter code: Coiled-coil domain-containing protein 160 (325 aa).

Disordered stretches follow at residues 18–45 and 81–123; these read SAQDVLEETSEPESSSEQTTADSSKGME and ENKR…CSTD. Residues 81–91 are compositionally biased toward basic and acidic residues; that stretch reads ENKRNISKNET. The segment covering 92-123 has biased composition (polar residues); sequence DTNSASYESSNVDVTTEESFNSTEDNSTCSTD. Positions 144–288 form a coiled coil; the sequence is KLCLNLLNEE…SVIKNELRTE (145 aa).

It belongs to the CCDC160 family.

The sequence is that of Coiled-coil domain-containing protein 160 (CCDC160) from Homo sapiens (Human).